Consider the following 421-residue polypeptide: AP-3 complex subunit mu (421 aa).

The 243-residue stretch at 178–420 (QNKIFFDIIE…TTKAGKFQVR (243 aa)) folds into the MHD domain.

This sequence belongs to the adaptor complexes medium subunit family. In terms of assembly, adaptor protein complex 3 (AP-3) is a heterotetramer composed of two large adaptins (delta-type subunit and beta-type subunit), a medium adaptin (mu-type subunit) and a small adaptin (sigma-type subunit).

The protein resides in the endosome membrane. Its function is as follows. Part of the AP-3 complex, an adaptor-related complex which is essential for the compartmentalization of the endocytic pathway. This chain is AP-3 complex subunit mu (apm3), found in Dictyostelium discoideum (Social amoeba).